The sequence spans 288 residues: Single myb histone 4 (288 aa).

Disordered stretches follow at residues 1-42 (MGAP…PVLS), 62-87 (GLGS…SQPL), and 181-206 (DSLA…KPSK). Residues 1 to 60 (MGAPKQKWTSEEEDALRAGVRKHGAGKWRTIQKDPEFSPVLSSRSNIDLKDKWRNLSFSA) form the HTH myb-type domain. The segment at residues 28–56 (WRTIQKDPEFSPVLSSRSNIDLKDKWRNL) is a DNA-binding region (H-T-H motif). Positions 76 to 87 (PSSSPSSSSQPL) are enriched in low complexity. An H15 domain is found at 113–181 (TLPKYGAMIM…KIDKSYRLPD (69 aa)). Positions 230–250 (KVADAEAKAHDAHDQTMEAER) form a coiled coil.

This sequence belongs to the histone H1/H5 family. SMH subfamily. As to quaternary structure, forms a homodimer and heterodimers.

Its subcellular location is the nucleus. The protein resides in the chromosome. It is found in the nucleolus. It localises to the telomere. Binds preferentially double-stranded telomeric repeats, but may also bind to the single telomeric strand. The chain is Single myb histone 4 (SMH4) from Zea mays (Maize).